Reading from the N-terminus, the 159-residue chain is MSENAEAPKQPVFALQRIYLKDLSFESPNSPAVFQSEWKPQVNMDLNTENKKVSDNQWEVVLTLTITAKLADKTAFVIEVQQAGVFMIDGLSPQQLAQTLGAFCPNILFPYARETIDMLAVKGSFPALMLQPVNFDAIYAEAVKRQQAQQAAPAEEAKH.

Belongs to the SecB family. Homotetramer, a dimer of dimers. One homotetramer interacts with 1 SecA dimer.

Its subcellular location is the cytoplasm. In terms of biological role, one of the proteins required for the normal export of preproteins out of the cell cytoplasm. It is a molecular chaperone that binds to a subset of precursor proteins, maintaining them in a translocation-competent state. It also specifically binds to its receptor SecA. The chain is Protein-export protein SecB from Hahella chejuensis (strain KCTC 2396).